Reading from the N-terminus, the 430-residue chain is MRVSISKSSVKGEVFAPSSKSYTHRAITLAALSNESIVRRPLLSADTLATIRASEMFGASVKREEENLIIHGFNGKPNVPDDVIDAANSGTTLRLMTAIAGLTDGITVLTGDSSLRTRPNGPLLKTLNQLGASACSTRGNEKAPLVVKGGLEGKKVSIEGSISSQFISALLIACPLAENSTTLSIIGKLKSRPYVDVTIEMLELAGVKIHTDENNGTKFIIPGKQKYDLKEYTIPGDFSSASYLLAAAAMTEGSEITVKNLFPSKQGDKLIIETLKQMGADITWDREAGIVTVRGGRKLKAVTFDAGATPDLVPTVAVLAAVAEGTSRIENAEHVRYKETDRLSALATELPKLGVKLKEEKDSLTITGGELKGAEVHGWDDHRIVMSLALAGMVAGNTTIDTTESVAISYPDFFEDMSNLGVKIKQISEE.

Positions 20, 21, and 25 each coordinate 3-phosphoshikimate. A phosphoenolpyruvate-binding site is contributed by lysine 20. Residues glycine 90 and arginine 118 each contribute to the phosphoenolpyruvate site. 6 residues coordinate 3-phosphoshikimate: serine 163, serine 164, glutamine 165, serine 191, aspartate 311, and lysine 338. Glutamine 165 contacts phosphoenolpyruvate. The Proton acceptor role is filled by aspartate 311. Positions 342 and 383 each coordinate phosphoenolpyruvate.

This sequence belongs to the EPSP synthase family. As to quaternary structure, monomer.

It localises to the cytoplasm. The enzyme catalyses 3-phosphoshikimate + phosphoenolpyruvate = 5-O-(1-carboxyvinyl)-3-phosphoshikimate + phosphate. Its pathway is metabolic intermediate biosynthesis; chorismate biosynthesis. Functionally, catalyzes the transfer of the enolpyruvyl moiety of phosphoenolpyruvate (PEP) to the 5-hydroxyl of shikimate-3-phosphate (S3P) to produce enolpyruvyl shikimate-3-phosphate and inorganic phosphate. This chain is 3-phosphoshikimate 1-carboxyvinyltransferase, found in Methanosarcina acetivorans (strain ATCC 35395 / DSM 2834 / JCM 12185 / C2A).